The following is a 69-amino-acid chain: Large ribosomal subunit protein bL32c (69 aa).

This sequence belongs to the bacterial ribosomal protein bL32 family.

The protein resides in the plastid. It localises to the chloroplast. The protein is Large ribosomal subunit protein bL32c (rpl32) of Anthoceros angustus (Hornwort).